The following is a 608-amino-acid chain: Aspartate--tRNA(Asp/Asn) ligase (608 aa).

L-aspartate is bound at residue glutamate 187. An aspartate region spans residues 211 to 214; sequence QQFK. Positions 233 and 461 each coordinate L-aspartate. 233–235 is a binding site for ATP; that stretch reads RDE. Glutamate 495 is a binding site for ATP. An L-aspartate-binding site is contributed by arginine 502. 547 to 550 contributes to the ATP binding site; that stretch reads GLDR.

It belongs to the class-II aminoacyl-tRNA synthetase family. Type 1 subfamily. In terms of assembly, homodimer.

It is found in the cytoplasm. It carries out the reaction tRNA(Asx) + L-aspartate + ATP = L-aspartyl-tRNA(Asx) + AMP + diphosphate. Its function is as follows. Aspartyl-tRNA synthetase with relaxed tRNA specificity since it is able to aspartylate not only its cognate tRNA(Asp) but also tRNA(Asn). Reaction proceeds in two steps: L-aspartate is first activated by ATP to form Asp-AMP and then transferred to the acceptor end of tRNA(Asp/Asn). This is Aspartate--tRNA(Asp/Asn) ligase from Prosthecochloris aestuarii (strain DSM 271 / SK 413).